The primary structure comprises 245 residues: Tyrosine recombinase XerD-like (245 aa).

The region spanning 1–72 (MITFISKFLA…AVNQFLFFLY (72 aa)) is the Core-binding (CB) domain. The Tyr recombinase domain maps to 90–245 (PLLTPAYQEV…PVTLEKYFKN (156 aa)). Catalysis depends on residues Lys151 and Arg210. The active-site O-(3'-phospho-DNA)-tyrosine intermediate is the Tyr242.

Belongs to the 'phage' integrase family. XerD-like subfamily.

It localises to the cytoplasm. In terms of biological role, putative tyrosine recombinase. Not involved in the cutting and rejoining of the recombining DNA molecules on dif(SL) site. In Streptococcus mutans serotype c (strain ATCC 700610 / UA159), this protein is Tyrosine recombinase XerD-like.